Here is a 190-residue protein sequence, read N- to C-terminus: Ras-like GTP-binding protein RhoL (190 aa).

18 to 25 (GDGMVGKT) contributes to the GTP binding site. Residues 40 to 48 (YIPTVFDNH) carry the Effector region motif. Residues 65–69 (DTAGQ) and 123–126 (TKLD) each bind GTP. Cys187 carries the post-translational modification Cysteine methyl ester. Cys187 is lipidated: S-geranylgeranyl cysteine. Positions 188-190 (KIL) are cleaved as a propeptide — removed in mature form.

Belongs to the small GTPase superfamily. Rho family. Highly expressed in the embryonic cephalic mesoderm starting from stage 6 and fading by stage 11. Hemocyte precursor cells.

It localises to the cell membrane. Essential for the maturation of hemocytes. In Drosophila melanogaster (Fruit fly), this protein is Ras-like GTP-binding protein RhoL (RhoL).